The primary structure comprises 301 residues: ADP-ribosyl cyclase/cyclic ADP-ribose hydrolase 1 (301 aa).

The Cytoplasmic portion of the chain corresponds to 1 to 21 (MANCEFSPVSGDKPCCRLSRR). Residues 22 to 43 (AQVCLGVCLLVLLILVVVVAVV) traverse the membrane as a helical; Signal-anchor for type II membrane protein segment. Over 44 to 301 (LPRWRQQWSG…PEDSSCLSGI (258 aa)) the chain is Extracellular. 3 cysteine pairs are disulfide-bonded: C68–C83, C100–C181, and C161–C174. N101 carries an N-linked (GlcNAc...) asparagine glycan. C120 is a catalytic residue. Residue N121 is glycosylated (N-linked (GlcNAc...) asparagine). The active site involves C202. 2 N-linked (GlcNAc...) asparagine glycosylation sites follow: N210 and N220. Cystine bridges form between C255/C276 and C288/C297.

The protein belongs to the ADP-ribosyl cyclase family. As to quaternary structure, homodimer.

The protein localises to the cell surface. Its subcellular location is the membrane. The enzyme catalyses NAD(+) = cyclic ADP-beta-D-ribose + nicotinamide + H(+). It catalyses the reaction 2'-phospho-cyclic ADP-ribose + nicotinate = nicotinate-adenine dinucleotide phosphate. It carries out the reaction NAD(+) + H2O = ADP-D-ribose + nicotinamide + H(+). The catalysed reaction is nicotinate + NADP(+) = nicotinate-adenine dinucleotide phosphate + nicotinamide. Its activity is regulated as follows. ATP inhibits the cADPR hydrolyzing activity. Functionally, synthesizes cyclic ADP-ribose (cADPR), a second messenger for glucose-induced insulin secretion. Synthesizes the Ca(2+) mobilizer nicotinate-adenine dinucleotide phosphate, NAADP(+), from 2'-phospho-cADPR and nicotinic acid, as well as from NADP(+) and nicotinic acid. Also has cADPR hydrolase activity. The sequence is that of ADP-ribosyl cyclase/cyclic ADP-ribose hydrolase 1 (CD38) from Macaca fascicularis (Crab-eating macaque).